A 192-amino-acid chain; its full sequence is Interferon (192 aa).

The signal sequence occupies residues Met-1–Ala-30. 3 disulfides stabilise this stretch: Cys-31-Cys-128, Cys-60-Cys-154, and Cys-67-Cys-167. Asn-70 and Asn-77 each carry an N-linked (GlcNAc...) asparagine glycan.

Belongs to the alpha/beta interferon family.

The protein resides in the secreted. Has antiviral activities. In Meleagris gallopavo (Wild turkey), this protein is Interferon.